A 180-amino-acid polypeptide reads, in one-letter code: NEDD8-conjugating enzyme ubc-12 (180 aa).

The 157-residue stretch at 24-180 (VRDKLLAQEL…RVREYISRYC (157 aa)) folds into the UBC core domain. Residue Cys-112 is the Glycyl thioester intermediate of the active site.

The protein belongs to the ubiquitin-conjugating enzyme family. UBC12 subfamily.

Its subcellular location is the cytoplasm. The catalysed reaction is [E1 NEDD8-activating enzyme]-S-[NEDD8 protein]-yl-L-cysteine + [E2 NEDD8-conjugating enzyme]-L-cysteine = [E1 NEDD8-activating enzyme]-L-cysteine + [E2 NEDD8-conjugating enzyme]-S-[NEDD8-protein]-yl-L-cysteine.. The protein operates within protein modification; protein neddylation. In terms of biological role, accepts the ubiquitin-like protein NEDD8 from the uba-3-ula-1 E1 complex and catalyzes its covalent attachment to other proteins. Plays a role in male tail tip morphogenesis. The chain is NEDD8-conjugating enzyme ubc-12 from Caenorhabditis elegans.